The primary structure comprises 317 residues: Methionyl-tRNA formyltransferase (317 aa).

(6S)-5,6,7,8-tetrahydrofolate is bound at residue 110-113 (SLLP).

It belongs to the Fmt family.

It carries out the reaction L-methionyl-tRNA(fMet) + (6R)-10-formyltetrahydrofolate = N-formyl-L-methionyl-tRNA(fMet) + (6S)-5,6,7,8-tetrahydrofolate + H(+). In terms of biological role, attaches a formyl group to the free amino group of methionyl-tRNA(fMet). The formyl group appears to play a dual role in the initiator identity of N-formylmethionyl-tRNA by promoting its recognition by IF2 and preventing the misappropriation of this tRNA by the elongation apparatus. The chain is Methionyl-tRNA formyltransferase from Bacillus pumilus (strain SAFR-032).